A 356-amino-acid polypeptide reads, in one-letter code: Histidinol-phosphate aminotransferase (356 aa).

Position 214 is an N6-(pyridoxal phosphate)lysine (lysine 214).

Belongs to the class-II pyridoxal-phosphate-dependent aminotransferase family. Histidinol-phosphate aminotransferase subfamily. Homodimer. Pyridoxal 5'-phosphate is required as a cofactor.

The enzyme catalyses L-histidinol phosphate + 2-oxoglutarate = 3-(imidazol-4-yl)-2-oxopropyl phosphate + L-glutamate. It participates in amino-acid biosynthesis; L-histidine biosynthesis; L-histidine from 5-phospho-alpha-D-ribose 1-diphosphate: step 7/9. The polypeptide is Histidinol-phosphate aminotransferase (Escherichia coli (strain 55989 / EAEC)).